The chain runs to 492 residues: Aspartyl/glutamyl-tRNA(Asn/Gln) amidotransferase subunit B (492 aa).

The protein belongs to the GatB/GatE family. GatB subfamily. In terms of assembly, heterotrimer of A, B and C subunits.

The enzyme catalyses L-glutamyl-tRNA(Gln) + L-glutamine + ATP + H2O = L-glutaminyl-tRNA(Gln) + L-glutamate + ADP + phosphate + H(+). It carries out the reaction L-aspartyl-tRNA(Asn) + L-glutamine + ATP + H2O = L-asparaginyl-tRNA(Asn) + L-glutamate + ADP + phosphate + 2 H(+). Functionally, allows the formation of correctly charged Asn-tRNA(Asn) or Gln-tRNA(Gln) through the transamidation of misacylated Asp-tRNA(Asn) or Glu-tRNA(Gln) in organisms which lack either or both of asparaginyl-tRNA or glutaminyl-tRNA synthetases. The reaction takes place in the presence of glutamine and ATP through an activated phospho-Asp-tRNA(Asn) or phospho-Glu-tRNA(Gln). This chain is Aspartyl/glutamyl-tRNA(Asn/Gln) amidotransferase subunit B, found in Bradyrhizobium sp. (strain BTAi1 / ATCC BAA-1182).